A 285-amino-acid polypeptide reads, in one-letter code: N(G),N(G)-dimethylarginine dimethylaminohydrolase 1 (285 aa).

Residue A2 is modified to N-acetylalanine. L30 contributes to the substrate binding site. Position 33 is a phosphoserine (S33). Substrate is bound by residues D73, E78, D79, R98, and R145. The Proton donor role is filled by H173. The residue at position 222 (C222) is an S-nitrosocysteine. V268 contacts substrate. An S-nitrosocysteine modification is found at C274. C274 (nucleophile) is an active-site residue. C274 contributes to the Zn(2+) binding site.

The protein belongs to the DDAH family. In terms of assembly, monomer. In terms of tissue distribution, detected in red blood cells (at protein level). Widely distributed, high amounts found in kidney, brain, aorta and pancreas.

The enzyme catalyses N(omega),N(omega)-dimethyl-L-arginine + H2O = dimethylamine + L-citrulline. The catalysed reaction is N(omega)-methyl-L-arginine + H2O = L-citrulline + methylamine. Its activity is regulated as follows. Inhibited by zinc ions. Hydrolyzes N(G),N(G)-dimethyl-L-arginine (ADMA) and N(G)-monomethyl-L-arginine (MMA) which act as inhibitors of NOS. Has therefore a role in the regulation of nitric oxide generation. This is N(G),N(G)-dimethylarginine dimethylaminohydrolase 1 (Ddah1) from Rattus norvegicus (Rat).